A 682-amino-acid chain; its full sequence is Penicillin-binding protein activator LpoA (682 aa).

The signal sequence occupies residues 1–26 (MLPLNSVRTHAGRLVPVMLAALFLAG). Residue C27 is the site of N-palmitoyl cysteine attachment. C27 is lipidated: S-diacylglycerol cysteine. 2 disordered regions span residues 240-262 (AKQL…TGET) and 314-341 (ANNA…VSPT). Residues 248-262 (GGTPPAAAAPTTGET) are compositionally biased toward low complexity.

The protein belongs to the LpoA family. As to quaternary structure, interacts with PBP1a.

The protein localises to the cell outer membrane. In terms of biological role, regulator of peptidoglycan synthesis that is essential for the function of penicillin-binding protein 1A (PBP1a). This Dickeya chrysanthemi (strain Ech1591) (Dickeya zeae (strain Ech1591)) protein is Penicillin-binding protein activator LpoA.